Reading from the N-terminus, the 1219-residue chain is FYVE, RhoGEF and PH domain-containing protein 5 (1219 aa).

Disordered regions lie at residues 1–85 (MGSP…SCQI), 94–113 (EEDFSPTLTENPYEIFPTES), 201–227 (SDTQAASGTLSGYSTWEEGDSEGGQVP), and 310–367 (GRES…PSSV). A compositionally biased stretch (acidic residues) spans 23-50 (EVFEEDSADAAEGEDQIEQEEPPNCDEE). Residues 201-214 (SDTQAASGTLSGYS) are compositionally biased toward polar residues. Positions 319–337 (REPEGAGLDSHRVRRKEDN) are enriched in basic and acidic residues. The span at 346-356 (SSGSFSQRSHL) shows a compositional bias: polar residues. Low complexity predominate over residues 357–367 (PSSGTSTPSSV). Residue T555 is modified to Phosphothreonine. Over residues 586-599 (ESKQQSSEQEAESA) the composition is skewed to low complexity. Residues 586 to 644 (ESKQQSSEQEAESAYTEPYKVCPISAAPREDLTSDEEQGSSEEEDSASRDPSLSHKGEG) form a disordered region. A compositionally biased stretch (acidic residues) spans 618–630 (TSDEEQGSSEEED). Positions 631–644 (SASRDPSLSHKGEG) are enriched in basic and acidic residues. Residues 647–840 (RALVIAQELL…SKVTDRANES (194 aa)) form the DH domain. The PH 1 domain occupies 869–963 (EFLKEGTLMR…WHYCLSRALP (95 aa)). The segment at 998-1057 (VTHAMMCMNCGCDFSLTVRRHHCHACGKIVCRNCSRNKYPLKCLKNRMAKVCDGCFRELK) adopts an FYVE-type zinc-finger fold. C1004, C1007, C1020, C1023, C1028, C1031, C1049, and C1052 together coordinate Zn(2+). Positions 1120 to 1218 (GSAISGYLSR…WMEAMEDASV (99 aa)) constitute a PH 2 domain.

In terms of tissue distribution, expressed in highly vascularized tissues, such as lung, kidney and ovary.

It localises to the cytoplasm. Its subcellular location is the cytoskeleton. The protein localises to the cell projection. The protein resides in the ruffle membrane. It is found in the endoplasmic reticulum. It localises to the golgi apparatus. Its subcellular location is the early endosome. In terms of biological role, activates CDC42, a member of the Ras-like family of Rho- and Rac proteins, by exchanging bound GDP for free GTP. Mediates VEGF-induced CDC42 activation. May regulate proangiogenic action of VEGF in vascular endothelial cells, including network formation, directional movement and proliferation. May play a role in regulating the actin cytoskeleton and cell shape. The protein is FYVE, RhoGEF and PH domain-containing protein 5 (Fgd5) of Mus musculus (Mouse).